A 389-amino-acid chain; its full sequence is Large envelope protein (389 aa).

M1 bears the N-acetylmethionine mark. G2 is lipidated: N-myristoyl glycine; by host. A pre-S1 region spans residues 2–108; the sequence is GTNLSVPNPL…PPLRDSHPQA (107 aa). Residues 2-163 are pre-S; the sequence is GTNLSVPNPL…SARTGDPVTI (162 aa). Topologically, residues 2–170 are virion surface; in external conformation; sequence GTNLSVPNPL…VTIMENITSG (169 aa). The Intravirion; in internal conformation segment spans residues 2 to 242; the sequence is GTNLSVPNPL…PGYRWMCLRR (241 aa). Residues 77-95 are compositionally biased toward polar residues; it reads VSTIPPPASTNRQSGRQPT. The tract at residues 77 to 103 is disordered; that stretch reads VSTIPPPASTNRQSGRQPTPISPPLRD. The tract at residues 109-163 is pre-S2; that stretch reads MQWNSTALHQALQDPRVRGLYLPAGGSSSGTVNPAPNIASHISSISARTGDPVTI. Residues 171–191 traverse the membrane as a helical segment; sequence FLGPLLVLQAGFFLLTRILTI. Residues 192–242 are Intravirion; in external conformation-facing; sequence PQSLDSWWTSLNFLGGSPVCLGQNSQSPTSNHSPTSCPPICPGYRWMCLRR. The chain crosses the membrane as a helical span at residues 243-263; that stretch reads FIIFLFILLLCLIFLLVLLDY. The Virion surface segment spans residues 264-337; sequence QGMLPVCPLI…WASVRFSWLS (74 aa). N309 carries N-linked (GlcNAc...) asparagine; by host glycosylation. Residues 338-358 traverse the membrane as a helical segment; sequence LLVPFVQWFVGLSPTVWLSAI. The Intravirion portion of the chain corresponds to 359–364; the sequence is WMMWYW. A helical transmembrane segment spans residues 365–387; sequence GPSLYSIVSPFIPLLPIFFCLWV. Residues 388–389 lie on the Virion surface side of the membrane; sequence YI.

This sequence belongs to the orthohepadnavirus major surface antigen family. In terms of assembly, in its internal form (Li-HBsAg), interacts with the capsid protein and with the isoform S. Interacts with host chaperone CANX. As to quaternary structure, associates with host chaperone CANX through its pre-S2 N glycan; this association may be essential for isoform M proper secretion. Interacts with isoform L. Interacts with the antigens of satellite virus HDV (HDVAgs); this interaction is required for encapsidation of HDV genomic RNA. Post-translationally, isoform M is N-terminally acetylated by host at a ratio of 90%, and N-glycosylated by host at the pre-S2 region. Myristoylated.

The protein localises to the virion membrane. The large envelope protein exists in two topological conformations, one which is termed 'external' or Le-HBsAg and the other 'internal' or Li-HBsAg. In its external conformation the protein attaches the virus to cell receptors and thereby initiating infection. This interaction determines the species specificity and liver tropism. This attachment induces virion internalization predominantly through caveolin-mediated endocytosis. The large envelope protein also assures fusion between virion membrane and endosomal membrane. In its internal conformation the protein plays a role in virion morphogenesis and mediates the contact with the nucleocapsid like a matrix protein. Its function is as follows. The middle envelope protein plays an important role in the budding of the virion. It is involved in the induction of budding in a nucleocapsid independent way. In this process the majority of envelope proteins bud to form subviral lipoprotein particles of 22 nm of diameter that do not contain a nucleocapsid. In Hepatitis B virus genotype A2 subtype adw (isolate Japan/Nishioka/1983) (HBV-A), this protein is Large envelope protein.